A 402-amino-acid polypeptide reads, in one-letter code: Tyrosine-protein kinase transforming protein ros (402 aa).

A Protein kinase domain is found at 98-377 (LNLHKLLGSG…KLQEIRHSPL (280 aa)). Residues 104 to 112 (LGSGAFGEV) and K133 contribute to the ATP site. The active-site Proton acceptor is D232. Position 268 is a phosphotyrosine; by autocatalysis (Y268).

It belongs to the protein kinase superfamily. Tyr protein kinase family. Insulin receptor subfamily.

It catalyses the reaction L-tyrosyl-[protein] + ATP = O-phospho-L-tyrosyl-[protein] + ADP + H(+). This is Tyrosine-protein kinase transforming protein ros (V-ROS) from Galliformes (UR2SV).